The primary structure comprises 291 residues: Taste receptor type 2 member 16 (291 aa).

Position 1 (Met-1) is a topological domain, extracellular. Residues 2-22 (IPIQLTVFFMIIYVLESLTII) form a helical membrane-spanning segment. Over 23-41 (VQSSLIVAVLGREWLQVRR) the chain is Cytoplasmic. Residues 42-62 (LMPVDMILISLGISRFCLQWA) traverse the membrane as a helical segment. Over 63–84 (SMLNNFCSYLNLNYVLCNLTIT) the chain is Extracellular. Asn-80 carries N-linked (GlcNAc...) asparagine glycosylation. The chain crosses the membrane as a helical span at residues 85–105 (WEFFNILTFWLNSLLTVFYCI). The Cytoplasmic portion of the chain corresponds to 106–125 (KVSSFTHHIFLWVRWRILRW). The helical transmembrane segment at 126 to 146 (FPWILLGSLTIACVTIIPSAI) threads the bilayer. Topologically, residues 147-182 (GNYIQIQLLTMEHLPRNSTVTDRLEKFHQYQFQSHT) are extracellular. Asn-163 is a glycosylation site (N-linked (GlcNAc...) asparagine). A helical membrane pass occupies residues 183–203 (VALVIPFILFLASTILLMASL). At 204–228 (TKQIQHHSTGHCNPSMKAHFTALRS) the chain is on the cytoplasmic side. Residues 229-249 (LAILFIVFTSYFLIILITIIG) form a helical membrane-spanning segment. Residues 250–257 (TLFDKRCW) are Extracellular-facing. A helical transmembrane segment spans residues 258–278 (LWVWEAFVYAFILMHSTSLML). Topologically, residues 279 to 291 (SSPTLKRILKGKC) are cytoplasmic.

The protein belongs to the G-protein coupled receptor T2R family. Interacts with RTP3 and RTP4.

It is found in the cell membrane. In terms of biological role, receptor that may play a role in the perception of bitterness and is gustducin-linked. May function as a bitter taste receptor for the phytonutrient beta glucopyranosides, some of which are toxic and some of which lower the risk of cancer and cardiovascular disease. The activity of this receptor may stimulate alpha gustducin, mediate PLC-beta-2 activation and lead to the gating of TRPM5. The sequence is that of Taste receptor type 2 member 16 (TAS2R16) from Pongo pygmaeus (Bornean orangutan).